The chain runs to 198 residues: MGTEVKLLVGLGNPGPEYERTRHNAGFWLVDDFCRRHAITLSPDTKSKALIGRWQQGAHDLRIVLPQNFMNRSGFSVAALANFYKIPANEILVAYDELDLPPGVAKFKKGGGAGGHNGIKDIIAQTGSQDFMRLRIGIGHPGDKTKVTGFVLGKASANEQRLIDDCIDEASRSIDTLMAEGWGTALQRLHSYRPEQKG.

Tyr-18 contributes to the tRNA binding site. Catalysis depends on His-23, which acts as the Proton acceptor. Residues Phe-69, Asn-71, and Asn-117 each coordinate tRNA.

This sequence belongs to the PTH family. In terms of assembly, monomer.

It localises to the cytoplasm. The enzyme catalyses an N-acyl-L-alpha-aminoacyl-tRNA + H2O = an N-acyl-L-amino acid + a tRNA + H(+). Its function is as follows. Hydrolyzes ribosome-free peptidyl-tRNAs (with 1 or more amino acids incorporated), which drop off the ribosome during protein synthesis, or as a result of ribosome stalling. In terms of biological role, catalyzes the release of premature peptidyl moieties from peptidyl-tRNA molecules trapped in stalled 50S ribosomal subunits, and thus maintains levels of free tRNAs and 50S ribosomes. The chain is Peptidyl-tRNA hydrolase from Idiomarina loihiensis (strain ATCC BAA-735 / DSM 15497 / L2-TR).